A 269-amino-acid chain; its full sequence is 4-hydroxy-tetrahydrodipicolinate reductase (269 aa).

NAD(+) contacts are provided by residues 11-16 and Glu-37; that span reads GASGRM. Arg-38 is an NADP(+) binding site. Residues 101–103 and 125–128 each bind NAD(+); these read GTT and AGNM. The active-site Proton donor/acceptor is His-158. Residue His-159 coordinates (S)-2,3,4,5-tetrahydrodipicolinate. Lys-162 acts as the Proton donor in catalysis. Residue 168 to 169 coordinates (S)-2,3,4,5-tetrahydrodipicolinate; it reads GT.

This sequence belongs to the DapB family.

The protein localises to the cytoplasm. The enzyme catalyses (S)-2,3,4,5-tetrahydrodipicolinate + NAD(+) + H2O = (2S,4S)-4-hydroxy-2,3,4,5-tetrahydrodipicolinate + NADH + H(+). It carries out the reaction (S)-2,3,4,5-tetrahydrodipicolinate + NADP(+) + H2O = (2S,4S)-4-hydroxy-2,3,4,5-tetrahydrodipicolinate + NADPH + H(+). Its pathway is amino-acid biosynthesis; L-lysine biosynthesis via DAP pathway; (S)-tetrahydrodipicolinate from L-aspartate: step 4/4. In terms of biological role, catalyzes the conversion of 4-hydroxy-tetrahydrodipicolinate (HTPA) to tetrahydrodipicolinate. This chain is 4-hydroxy-tetrahydrodipicolinate reductase, found in Cereibacter sphaeroides (strain ATCC 17029 / ATH 2.4.9) (Rhodobacter sphaeroides).